The sequence spans 467 residues: ADP-dependent glucose/glucosamine kinase (467 aa).

Positions 10–467 (RLWKRLYVNA…FVSEFGMRKR (458 aa)) constitute an ADPK domain. D-glucose contacts are provided by residues D42, E96, G120, 120–121 (GQ), H184, and D211. Mg(2+) is bound at residue E279. N305 lines the ADP pocket. A Mg(2+)-binding site is contributed by E308. ADP is bound by residues 352-353 (HT), V440, and G450. D451 contacts D-glucose. Mg(2+) is bound at residue D451. D451 functions as the Proton acceptor in the catalytic mechanism.

Belongs to the ADP-dependent glucokinase family. In terms of assembly, monomer. It depends on Mg(2+) as a cofactor.

Its subcellular location is the cytoplasm. It catalyses the reaction D-glucose + ADP = D-glucose 6-phosphate + AMP + H(+). The catalysed reaction is D-glucosamine + ADP = D-glucosamine 6-phosphate + AMP + H(+). Its pathway is carbohydrate degradation; glycolysis. Catalyzes the ADP-dependent phosphorylation of D-glucose to D-glucose 6-phosphate and glucosamine to glucosamine 6-phosphate. Can also use CDP as the phosphoryl group donor and D-1,5-anhydroglucitol as the phosphoryl group acceptor. The protein is ADP-dependent glucose/glucosamine kinase of Thermococcus litoralis (strain ATCC 51850 / DSM 5473 / JCM 8560 / NS-C).